Here is a 346-residue protein sequence, read N- to C-terminus: S-adenosylmethionine:tRNA ribosyltransferase-isomerase (346 aa).

This sequence belongs to the QueA family. In terms of assembly, monomer.

The protein localises to the cytoplasm. It catalyses the reaction 7-aminomethyl-7-carbaguanosine(34) in tRNA + S-adenosyl-L-methionine = epoxyqueuosine(34) in tRNA + adenine + L-methionine + 2 H(+). The protein operates within tRNA modification; tRNA-queuosine biosynthesis. In terms of biological role, transfers and isomerizes the ribose moiety from AdoMet to the 7-aminomethyl group of 7-deazaguanine (preQ1-tRNA) to give epoxyqueuosine (oQ-tRNA). This Lysinibacillus sphaericus (strain C3-41) protein is S-adenosylmethionine:tRNA ribosyltransferase-isomerase.